Here is a 591-residue protein sequence, read N- to C-terminus: DEAD-box ATP-dependent RNA helicase 35 (591 aa).

The Q motif signature appears at 146–174 (KNFKDMKFPRPVLDTLKEKGIVQPTPIQV). The Helicase ATP-binding domain maps to 177 to 361 (LPVILAGRDM…RSALVKPVTV (185 aa)). 190–197 (AFTGSGKT) is a binding site for ATP. The DEAD box motif lies at 309 to 312 (DEAD). Positions 372–532 (DVIQEVEYVK…RIPPVLAELN (161 aa)) constitute a Helicase C-terminal domain. The CCHC-type zinc-finger motif lies at 548–565 (KGCAYCGGLGHRIRDCPK).

The protein belongs to the DEAD box helicase family. DDX41 subfamily.

It catalyses the reaction ATP + H2O = ADP + phosphate + H(+). The sequence is that of DEAD-box ATP-dependent RNA helicase 35 (RH35) from Arabidopsis thaliana (Mouse-ear cress).